The primary structure comprises 279 residues: NAD kinase (279 aa).

The active-site Proton acceptor is D57. NAD(+) contacts are provided by residues 57 to 58, 133 to 134, R159, D161, and 172 to 177; these read DG, NE, and TAYNKS.

The protein belongs to the NAD kinase family. Requires a divalent metal cation as cofactor.

It is found in the cytoplasm. The catalysed reaction is NAD(+) + ATP = ADP + NADP(+) + H(+). Involved in the regulation of the intracellular balance of NAD and NADP, and is a key enzyme in the biosynthesis of NADP. Catalyzes specifically the phosphorylation on 2'-hydroxyl of the adenosine moiety of NAD to yield NADP. This is NAD kinase from Streptococcus pyogenes serotype M2 (strain MGAS10270).